The following is a 176-amino-acid chain: Adenine phosphoribosyltransferase (176 aa).

The protein belongs to the purine/pyrimidine phosphoribosyltransferase family. Homodimer.

The protein resides in the cytoplasm. The catalysed reaction is AMP + diphosphate = 5-phospho-alpha-D-ribose 1-diphosphate + adenine. It participates in purine metabolism; AMP biosynthesis via salvage pathway; AMP from adenine: step 1/1. Its function is as follows. Catalyzes a salvage reaction resulting in the formation of AMP, that is energically less costly than de novo synthesis. This chain is Adenine phosphoribosyltransferase, found in Borrelia garinii subsp. bavariensis (strain ATCC BAA-2496 / DSM 23469 / PBi) (Borreliella bavariensis).